Consider the following 3179-residue polypeptide: Guanylate cyclase beta (3179 aa).

Topologically, residues 1 to 60 are cytoplasmic; the sequence is MKTQTLSLMNINGKRKFLGTNNKIYRKVIINPTSEDDIQKFCRNYFRIYNFSLYNFIRRL. Residues 61–81 traverse the membrane as a helical segment; it reads ISFDAILVYSLFLTVYIFSEI. Over 82 to 88 the chain is Extracellular; it reads NHGETKK. The chain crosses the membrane as a helical span at residues 89-109; sequence YLFIDTAISLFFNIILLIVIE. The Cytoplasmic portion of the chain corresponds to 110–295; that stretch reads SLFELKKLKD…FCIKMNNIVY (186 aa). A helical membrane pass occupies residues 296-316; that stretch reads YLIFMYFVFVVLSIVIKTIFF. Residues 317-328 lie on the Extracellular side of the membrane; that stretch reads HKKNSFQNSRDS. A helical membrane pass occupies residues 329 to 349; the sequence is FLSMLEDFVGLYILVLPIMMY. Residues 350 to 988 lie on the Cytoplasmic side of the membrane; that stretch reads SEKSLIYIIQ…GRLNRFSLCK (639 aa). The helical transmembrane segment at 989–1009 threads the bilayer; sequence VFLWIIYLKITVVSFYFFHNF. Residues 1010–1020 are Extracellular-facing; it reads DNYFSGSSASS. A helical membrane pass occupies residues 1021–1041; sequence ILYTQTTFALLHYFLIIAFSA. The Cytoplasmic portion of the chain corresponds to 1042–1069; the sequence is YEIDLPYKFVRRLPYIYQLSRRKYFLNN. Residues 1070-1090 form a helical membrane-spanning segment; the sequence is NIILLTIIEAILISLTSYYIL. Residues 1091 to 1102 lie on the Extracellular side of the membrane; it reads RLNVFHLITHRE. The chain crosses the membrane as a helical span at residues 1103-1123; sequence FTFHIFILNVFITTEKILLLS. Residues 1124-1127 are Cytoplasmic-facing; sequence KTWH. Residues 1128 to 1148 traverse the membrane as a helical segment; the sequence is IYFFIMAVLIIGILLIYVNIF. Over 1149–1168 the chain is Extracellular; that stretch reads TLVDCIKNGKCEFSLFQMEN. Residues 1169–1189 form a helical membrane-spanning segment; it reads IYFWTSLFPILYINFIFDKLM. The Cytoplasmic segment spans residues 1190–1304; the sequence is KYIKNRIYPD…YEKGNKLKLR (115 aa). The helical transmembrane segment at 1305–1325 threads the bilayer; the sequence is IIVILLFLIYIIIFSSQTIID. Residues 1326–1331 lie on the Extracellular side of the membrane; that stretch reads INTKSN. The helical transmembrane segment at 1332-1352 threads the bilayer; that stretch reads IHYITMFYIIYFVLACVLLIY. At 1353 to 1360 the chain is on the cytoplasmic side; that stretch reads IRIRNKAT. A helical transmembrane segment spans residues 1361 to 1381; sequence STFFFFLSRFLLICGFCIELY. Over 1382 to 1401 the chain is Extracellular; it reads DNISNDILNVLITYSFTVSY. The N-linked (GlcNAc...) asparagine glycan is linked to asparagine 1383. Residues 1402 to 1422 traverse the membrane as a helical segment; that stretch reads IFFMSFKILEALLVCISILLL. Residues 1423–1464 are Cytoplasmic-facing; sequence TFGVYYEKNKNMIDICTHFCSNPYLSINNLDHMNISCLCKKQ. A helical membrane pass occupies residues 1465 to 1485; sequence IVIFLISLLSFTLICLSMKYY. Over 1486–1507 the chain is Extracellular; sequence EIFYLKKKFLFRYKQKVNLAKQ. A helical membrane pass occupies residues 1508-1528; sequence IEILHTMLPNFLVEYLLISDP. Residues 1529-2739 lie on the Cytoplasmic side of the membrane; that stretch reads KNDGIMVGKN…IINIDLTKKL (1211 aa). Residues 1548–1700 form the Guanylate cyclase 1 domain; it reads SVIFCDIDDF…DTVNTASRMK (153 aa). Disordered stretches follow at residues 2123-2153, 2355-2379, and 2576-2656; these read LHNYNPMKNKNKNKKNNKNVRRNEYPNYTSS, SINKQTERKPKKKNKKNIENKKDKK, and KDSD…HHHS. Positions 2131–2142 are enriched in basic residues; sequence NKNKNKKNNKNV. Residues 2584–2607 show a composition bias toward low complexity; it reads NNNKISKNRYNNNNNNNNSNYSNI. The segment covering 2614–2645 has biased composition (basic residues); that stretch reads HNNKKNHHHNNNKYHHHNNNKYHHHNNNKYHH. The helical transmembrane segment at 2740–2760 threads the bilayer; the sequence is IIIFIFTEIFLSLCNIIELSF. Residues 2761–2770 are Extracellular-facing; that stretch reads YEKKLRYNDS. Residue asparagine 2768 is glycosylated (N-linked (GlcNAc...) asparagine). The chain crosses the membrane as a helical span at residues 2771–2791; that stretch reads IVIIWLIRSIYLFIITYIWII. At 2792–2809 the chain is on the cytoplasmic side; it reads LKTKLKEYKNNSSKMMWT. The chain crosses the membrane as a helical span at residues 2810-2830; sequence IFILNIFLCSWGIILIDLSCI. Over 2831–2842 the chain is Extracellular; that stretch reads HYSMLLGNKNER. Residues 2843-2863 traverse the membrane as a helical segment; it reads ALFFMKDASELIICIQLIFIK. Topologically, residues 2864–2870 are cytoplasmic; the sequence is NMLFKHK. Residues 2871–2891 traverse the membrane as a helical segment; the sequence is FFFFVFFYIFLIYSFSKLFSI. Residues 2892–2895 are Extracellular-facing; that stretch reads HTCQ. The chain crosses the membrane as a helical span at residues 2896–2916; sequence THICCSIILFISINILYFWYS. Topologically, residues 2917–3179 are cytoplasmic; that stretch reads EYLDRIQFLV…KLRQKKGLRS (263 aa). A Guanylate cyclase 2 domain is found at 2968 to 3102; sequence AFLFADIVGF…LDVLIANKIE (135 aa). Positions 2973, 2974, and 3017 each coordinate Mg(2+).

This sequence in the N-terminal section; belongs to the cation transport ATPase (P-type) (TC 3.A.3) family. Type IV subfamily. In the C-terminal section; belongs to the adenylyl cyclase class-4/guanylyl cyclase family. The cofactor is Mg(2+). Mn(2+) is required as a cofactor.

The protein localises to the membrane. The catalysed reaction is GTP = 3',5'-cyclic GMP + diphosphate. Basal guanylate activity of the recombinant guanylate cyclase domains 1 and 2 is not modulated by an increase in Ca(2+) levels or by the gametogenesis inducer xanthurenic acid. In terms of biological role, catalyzes the synthesis of the second messenger cGMP from GTP. Regulates cGMP production in gametocytes; however, is dispensable for the initiation of gametogenesis. Does not have adenylate cyclase activity. The chain is Guanylate cyclase beta from Plasmodium falciparum (isolate 3D7).